We begin with the raw amino-acid sequence, 158 residues long: Ribosome maturation factor RimP (158 aa).

Belongs to the RimP family.

It localises to the cytoplasm. Required for maturation of 30S ribosomal subunits. In Leuconostoc mesenteroides subsp. mesenteroides (strain ATCC 8293 / DSM 20343 / BCRC 11652 / CCM 1803 / JCM 6124 / NCDO 523 / NBRC 100496 / NCIMB 8023 / NCTC 12954 / NRRL B-1118 / 37Y), this protein is Ribosome maturation factor RimP.